The primary structure comprises 172 residues: Cold-inducible RNA-binding protein (172 aa).

The region spanning 6 to 84 is the RRM domain; the sequence is GKLFVGGLSF…RQIRVDQAGK (79 aa). Positions 70–172 are disordered; sequence KSVDGRQIRV…SYDSYATHNE (103 aa). 2 stretches are compositionally biased toward gly residues: residues 93 to 105 and 114 to 137; these read YRGG…GFFR and FSRG…GYGG. Residues serine 130, serine 138, serine 146, serine 156, serine 159, and serine 163 each carry the phosphoserine modification. A compositionally biased stretch (low complexity) spans 138-172; sequence SRDYYASRSQGGSYGYRSSGGSYRDSYDSYATHNE.

Interacts with EIF4G1. Associates with ribosomes. Methylated on arginine residues. Methylation of the RGG motifs is a prerequisite for recruitment into SGs. In terms of processing, phosphorylated by CK2, GSK3A and GSK3B. Phosphorylation by GSK3B increases RNA-binding activity to the TXN 3'-UTR transcript upon exposure to UV radiation. As to expression, ubiquitous.

The protein localises to the nucleus. It is found in the nucleoplasm. Its subcellular location is the cytoplasm. Functionally, cold-inducible mRNA binding protein that plays a protective role in the genotoxic stress response by stabilizing transcripts of genes involved in cell survival. Promotes assembly of stress granules (SGs), when overexpressed. Seems to play an essential role in cold-induced suppression of cell proliferation. Acts as a translational repressor. Acts as a translational activator. Binds specifically to the 3'-untranslated regions (3'-UTRs) of stress-responsive transcripts RPA2 and TXN. In Mus musculus (Mouse), this protein is Cold-inducible RNA-binding protein (Cirbp).